Here is a 177-residue protein sequence, read N- to C-terminus: ATP synthase subunit delta (177 aa).

The protein belongs to the ATPase delta chain family. As to quaternary structure, F-type ATPases have 2 components, F(1) - the catalytic core - and F(0) - the membrane proton channel. F(1) has five subunits: alpha(3), beta(3), gamma(1), delta(1), epsilon(1). F(0) has three main subunits: a(1), b(2) and c(10-14). The alpha and beta chains form an alternating ring which encloses part of the gamma chain. F(1) is attached to F(0) by a central stalk formed by the gamma and epsilon chains, while a peripheral stalk is formed by the delta and b chains.

The protein resides in the cell membrane. Its function is as follows. F(1)F(0) ATP synthase produces ATP from ADP in the presence of a proton or sodium gradient. F-type ATPases consist of two structural domains, F(1) containing the extramembraneous catalytic core and F(0) containing the membrane proton channel, linked together by a central stalk and a peripheral stalk. During catalysis, ATP synthesis in the catalytic domain of F(1) is coupled via a rotary mechanism of the central stalk subunits to proton translocation. This protein is part of the stalk that links CF(0) to CF(1). It either transmits conformational changes from CF(0) to CF(1) or is implicated in proton conduction. This chain is ATP synthase subunit delta, found in Carboxydothermus hydrogenoformans (strain ATCC BAA-161 / DSM 6008 / Z-2901).